A 609-amino-acid polypeptide reads, in one-letter code: Kelch-like protein 20 (609 aa).

In terms of domain architecture, BTB spans 68–135; that stretch reads CDVVLVVGAK…AYTSQITVEE (68 aa). The 103-residue stretch at 170–272 folds into the BACK domain; it reads CLGIRAFADT…SPKFLVGTVG (103 aa). Kelch repeat units follow at residues 319-365, 367-413, 414-460, 462-507, 509-554, and 556-601; these read VLFA…VLDD, LYAV…VLGG, FLYA…VLGG, LYAV…VYQD, IYAV…VVNG, and LMAV…VIKM.

Component of the BCR(KLHL20) E3 ubiquitin ligase complex, at least composed of CUL3, KLHL20 and RBX1. Interacts with PDZ-RhoGEF/ARHGEF11, DAPK1, PML and CORO7. Interacts with F-actin. Interacts with IFN-gamma (IFNG). Interacts (via kelch repeats) with IVNS1ABP (via kelch repeats); this interaction blocks the assembly of CUL3-KLHL20 complex.

It is found in the cytoplasm. The protein localises to the perinuclear region. The protein resides in the nucleus. Its subcellular location is the golgi apparatus. It localises to the trans-Golgi network. It is found in the cell projection. The protein localises to the axon. The protein resides in the dendrite. It participates in protein modification; protein ubiquitination. Its function is as follows. Substrate-specific adapter of a BCR (BTB-CUL3-RBX1) E3 ubiquitin-protein ligase complex involved in interferon response and anterograde Golgi to endosome transport. The BCR(KLHL20) E3 ubiquitin ligase complex mediates the ubiquitination of DAPK1, leading to its degradation by the proteasome, thereby acting as a negative regulator of apoptosis. The BCR(KLHL20) E3 ubiquitin ligase complex also specifically mediates 'Lys-33'-linked ubiquitination. Involved in anterograde Golgi to endosome transport by mediating 'Lys-33'-linked ubiquitination of CORO7, promoting interaction between CORO7 and EPS15, thereby facilitating actin polymerization and post-Golgi trafficking. Also acts as a regulator of endothelial migration during angiogenesis by controlling the activation of Rho GTPases. The BCR(KLHL20) E3 ubiquitin ligase complex acts as a regulator of neurite outgrowth by mediating ubiquitination and degradation of PDZ-RhoGEF/ARHGEF11. The chain is Kelch-like protein 20 (KLHL20) from Pongo abelii (Sumatran orangutan).